We begin with the raw amino-acid sequence, 552 residues long: MAEKQKHDGRVKIGHYVLGDTLGVGTFGKVKIGEHQLTGHKVAVKILNRQKIRSLDVVGKIKREIQNLKLFRHPHIIKLYQVISTPTDFFMVMEYVSGGELFDYICKHGRVEEMEARRLFQQILSAVDYCHRHMVVHRDLKPENVLLDAHMNAKIADFGLSNIMSDGEFLRTSCGSPNYAAPEVISGRLYAGPEVDIWSCGVILYALLCGTLPFDDEHVPTLFKKIRGGVFYIPEYLNRSVATLLMHMLQVDPLKRATIKDIREHEWFKQDLPSYLFPEDPSYDANVIDDEAVKEVCEKFECTESEVMNSLYSGDPQDQLAVAYHLIIDNRRIMNQASEFYLASSPPSGSFMDDSAMHIPPGLKPHPERMPPLIADSPKARCPLDALNTTKPKSLAVKKAKWHLGIRSQSKPYDIMAEVYRAMKQLDFEWKVVNAYHLRVRRKNPVTGNYVKMSLQLYLVDNRSYLLDFKSIDDEVVEQRSGSSTPQRSCSAAGLHRPRSSFDSTTAESHSLSGSLTGSLTGSTLSSVSPRLGSHTMDFFEMCASLITTLAR.

One can recognise a Protein kinase domain in the interval 16-268 (YVLGDTLGVG…IKDIREHEWF (253 aa)). Residues 22-30 (LGVGTFGKV) and lysine 45 contribute to the ATP site. Aspartate 139 acts as the Proton acceptor in catalysis. Position 172 is a phosphothreonine; by LKB1 and CaMKK2 (threonine 172). Threonine 258 is modified (phosphothreonine). The tract at residues 291-376 (EAVKEVCEKF…PERMPPLIAD (86 aa)) is AIS. At serine 377 the chain carries Phosphoserine. The disordered stretch occupies residues 477 to 521 (VEQRSGSSTPQRSCSAAGLHRPRSSFDSTTAESHSLSGSLTGSLT). The span at 480-490 (RSGSSTPQRSC) shows a compositional bias: polar residues. The residue at position 491 (serine 491) is a Phosphoserine. The span at 501-510 (SFDSTTAESH) shows a compositional bias: polar residues. Over residues 511 to 521 (SLSGSLTGSLT) the composition is skewed to low complexity.

It belongs to the protein kinase superfamily. CAMK Ser/Thr protein kinase family. SNF1 subfamily. AMPK is a heterotrimer of an alpha catalytic subunit (PRKAA1 or PRKAA2), a beta (PRKAB1 or PRKAB2) and a gamma non-catalytic subunits (PRKAG1, PRKAG2 or PRKAG3). Interacts with FNIP1 and FNIP2. Interacts with DUSP29. Interacts with ARF6. The phosphorylated form at Thr-172 mediated by CamKK2 interacts with ACSS2. Mg(2+) serves as cofactor. Post-translationally, ubiquitinated. In terms of processing, phosphorylated at Thr-172 by STK11/LKB1 in complex with STE20-related adapter-alpha (STRADA) pseudo kinase and CAB39. Also phosphorylated at Thr-172 by CAMKK2; triggered by a rise in intracellular calcium ions, without detectable changes in the AMP/ATP ratio. CAMKK1 can also phosphorylate Thr-172, but at much lower level. Dephosphorylated by protein phosphatase 2A and 2C (PP2A and PP2C). Phosphorylated by ULK1; leading to negatively regulate AMPK activity and suggesting the existence of a regulatory feedback loop between ULK1 and AMPK. Dephosphorylated by PPM1A and PPM1B at Thr-172 (mediated by STK11/LKB1).

The protein resides in the cytoplasm. Its subcellular location is the nucleus. The enzyme catalyses L-seryl-[protein] + ATP = O-phospho-L-seryl-[protein] + ADP + H(+). It carries out the reaction L-threonyl-[protein] + ATP = O-phospho-L-threonyl-[protein] + ADP + H(+). It catalyses the reaction L-seryl-[acetyl-CoA carboxylase] + ATP = O-phospho-L-seryl-[acetyl-CoA carboxylase] + ADP + H(+). The catalysed reaction is L-seryl-[3-hydroxy-3-methylglutaryl-coenzyme A reductase] + ATP = O-phospho-L-seryl-[3-hydroxy-3-methylglutaryl-coenzyme A reductase] + ADP + H(+). With respect to regulation, activated by phosphorylation on Thr-172. Binding of AMP to non-catalytic gamma subunit (PRKAG1, PRKAG2 or PRKAG3) results in allosteric activation, inducing phosphorylation on Thr-172. AMP-binding to gamma subunit also sustains activity by preventing dephosphorylation of Thr-172. ADP also stimulates Thr-172 phosphorylation, without stimulating already phosphorylated AMPK. ATP promotes dephosphorylation of Thr-172, rendering the enzyme inactive. Under physiological conditions AMPK mainly exists in its inactive form in complex with ATP, which is much more abundant than AMP. Selectively inhibited by compound C (6-[4-(2-Piperidin-1-yl-ethoxy)-phenyl)]-3-pyridin-4-yl-pyyrazolo[1,5-a] pyrimidine. Activated by resveratrol, a natural polyphenol present in red wine, and S17834, a synthetic polyphenol. Salicylate/aspirin directly activates kinase activity, primarily by inhibiting Thr-172 dephosphorylation. Its function is as follows. Catalytic subunit of AMP-activated protein kinase (AMPK), an energy sensor protein kinase that plays a key role in regulating cellular energy metabolism. In response to reduction of intracellular ATP levels, AMPK activates energy-producing pathways and inhibits energy-consuming processes: inhibits protein, carbohydrate and lipid biosynthesis, as well as cell growth and proliferation. AMPK acts via direct phosphorylation of metabolic enzymes, and by longer-term effects via phosphorylation of transcription regulators. Regulates lipid synthesis by phosphorylating and inactivating lipid metabolic enzymes such as ACACA, ACACB, GYS1, HMGCR and LIPE; regulates fatty acid and cholesterol synthesis by phosphorylating acetyl-CoA carboxylase (ACACA and ACACB) and hormone-sensitive lipase (LIPE) enzymes, respectively. Promotes lipolysis of lipid droplets by mediating phosphorylation of isoform 1 of CHKA (CHKalpha2). Regulates insulin-signaling and glycolysis by phosphorylating IRS1, PFKFB2 and PFKFB3. Involved in insulin receptor/INSR internalization. AMPK stimulates glucose uptake in muscle by increasing the translocation of the glucose transporter SLC2A4/GLUT4 to the plasma membrane, possibly by mediating phosphorylation of TBC1D4/AS160. Regulates transcription and chromatin structure by phosphorylating transcription regulators involved in energy metabolism such as CRTC2/TORC2, FOXO3, histone H2B, HDAC5, MEF2C, MLXIPL/ChREBP, EP300, HNF4A, p53/TP53, SREBF1, SREBF2 and PPARGC1A. Acts as a key regulator of glucose homeostasis in liver by phosphorylating CRTC2/TORC2, leading to CRTC2/TORC2 sequestration in the cytoplasm. In response to stress, phosphorylates 'Ser-36' of histone H2B (H2BS36ph), leading to promote transcription. Acts as a key regulator of cell growth and proliferation by phosphorylating FNIP1, TSC2, RPTOR, WDR24 and ATG1/ULK1: in response to nutrient limitation, negatively regulates the mTORC1 complex by phosphorylating RPTOR component of the mTORC1 complex and by phosphorylating and activating TSC2. Also phosphorylates and inhibits GATOR2 subunit WDR24 in response to nutrient limitation, leading to suppress glucose-mediated mTORC1 activation. In response to energetic stress, phosphorylates FNIP1, inactivating the non-canonical mTORC1 signaling, thereby promoting nuclear translocation of TFEB and TFE3, and inducing transcription of lysosomal or autophagy genes. In response to nutrient limitation, promotes autophagy by phosphorylating and activating ATG1/ULK1. In that process also activates WDR45/WIPI4. Phosphorylates CASP6, thereby preventing its autoprocessing and subsequent activation. AMPK also acts as a regulator of circadian rhythm by mediating phosphorylation of CRY1, leading to destabilize it. May regulate the Wnt signaling pathway by phosphorylating CTNNB1, leading to stabilize it. Also acts as a regulator of cellular polarity by remodeling the actin cytoskeleton; probably by indirectly activating myosin. Also phosphorylates CFTR, EEF2K, KLC1, NOS3 and SLC12A1. Plays an important role in the differential regulation of pro-autophagy (composed of PIK3C3, BECN1, PIK3R4 and UVRAG or ATG14) and non-autophagy (composed of PIK3C3, BECN1 and PIK3R4) complexes, in response to glucose starvation. Can inhibit the non-autophagy complex by phosphorylating PIK3C3 and can activate the pro-autophagy complex by phosphorylating BECN1. Upon glucose starvation, promotes ARF6 activation in a kinase-independent manner leading to cell migration. Upon glucose deprivation mediates the phosphorylation of ACSS2 at 'Ser-659', which exposes the nuclear localization signal of ACSS2, required for its interaction with KPNA1 and nuclear translocation. Upon stress, regulates mitochondrial fragmentation through phosphorylation of MTFR1L. This chain is 5'-AMP-activated protein kinase catalytic subunit alpha-2 (PRKAA2), found in Pongo abelii (Sumatran orangutan).